The chain runs to 260 residues: Acyl-[acyl-carrier-protein]--UDP-N-acetylglucosamine O-acyltransferase (260 aa).

This sequence belongs to the transferase hexapeptide repeat family. LpxA subfamily. In terms of assembly, homotrimer.

The protein resides in the cytoplasm. It carries out the reaction a (3R)-hydroxyacyl-[ACP] + UDP-N-acetyl-alpha-D-glucosamine = a UDP-3-O-[(3R)-3-hydroxyacyl]-N-acetyl-alpha-D-glucosamine + holo-[ACP]. Its pathway is glycolipid biosynthesis; lipid IV(A) biosynthesis; lipid IV(A) from (3R)-3-hydroxytetradecanoyl-[acyl-carrier-protein] and UDP-N-acetyl-alpha-D-glucosamine: step 1/6. Functionally, involved in the biosynthesis of lipid A, a phosphorylated glycolipid that anchors the lipopolysaccharide to the outer membrane of the cell. This Aliarcobacter butzleri (strain RM4018) (Arcobacter butzleri) protein is Acyl-[acyl-carrier-protein]--UDP-N-acetylglucosamine O-acyltransferase.